A 356-amino-acid polypeptide reads, in one-letter code: Histidinol-phosphate aminotransferase (356 aa).

Lys214 is subject to N6-(pyridoxal phosphate)lysine.

This sequence belongs to the class-II pyridoxal-phosphate-dependent aminotransferase family. Histidinol-phosphate aminotransferase subfamily. Homodimer. The cofactor is pyridoxal 5'-phosphate.

It carries out the reaction L-histidinol phosphate + 2-oxoglutarate = 3-(imidazol-4-yl)-2-oxopropyl phosphate + L-glutamate. It participates in amino-acid biosynthesis; L-histidine biosynthesis; L-histidine from 5-phospho-alpha-D-ribose 1-diphosphate: step 7/9. In Escherichia coli O157:H7, this protein is Histidinol-phosphate aminotransferase (hisC).